Consider the following 72-residue polypeptide: Translation initiation factor IF-1 (72 aa).

The S1-like domain occupies 1–72 (MTKEDCIEMQ…SKGRIIFRSR (72 aa)).

The protein belongs to the IF-1 family. In terms of assembly, component of the 30S ribosomal translation pre-initiation complex which assembles on the 30S ribosome in the order IF-2 and IF-3, IF-1 and N-formylmethionyl-tRNA(fMet); mRNA recruitment can occur at any time during PIC assembly.

The protein resides in the cytoplasm. Its function is as follows. One of the essential components for the initiation of protein synthesis. Stabilizes the binding of IF-2 and IF-3 on the 30S subunit to which N-formylmethionyl-tRNA(fMet) subsequently binds. Helps modulate mRNA selection, yielding the 30S pre-initiation complex (PIC). Upon addition of the 50S ribosomal subunit IF-1, IF-2 and IF-3 are released leaving the mature 70S translation initiation complex. This chain is Translation initiation factor IF-1, found in Buchnera aphidicola subsp. Baizongia pistaciae (strain Bp).